The primary structure comprises 239 residues: Uridylate kinase (239 aa).

12 to 15 (KLSG) contributes to the ATP binding site. The tract at residues 20 to 25 (GEKGFG) is involved in allosteric activation by GTP. Gly-54 contacts UMP. ATP-binding residues include Gly-55 and Arg-59. Residues Asp-72 and 133–140 (TGNPFFST) each bind UMP. 2 residues coordinate ATP: Tyr-166 and Asp-169.

Belongs to the UMP kinase family. Homohexamer.

It is found in the cytoplasm. The catalysed reaction is UMP + ATP = UDP + ADP. The protein operates within pyrimidine metabolism; CTP biosynthesis via de novo pathway; UDP from UMP (UMPK route): step 1/1. With respect to regulation, allosterically activated by GTP. Inhibited by UTP. Catalyzes the reversible phosphorylation of UMP to UDP. This chain is Uridylate kinase, found in Caldicellulosiruptor saccharolyticus (strain ATCC 43494 / DSM 8903 / Tp8T 6331).